We begin with the raw amino-acid sequence, 462 residues long: CCA-adding enzyme (462 aa).

ATP contacts are provided by Ser54 and Arg57. Residues Ser54 and Arg57 each coordinate CTP. Positions 66, 68, and 117 each coordinate Mg(2+). 3 residues coordinate ATP: His140, Lys160, and Tyr169. Residues His140, Lys160, and Tyr169 each coordinate CTP.

This sequence belongs to the tRNA nucleotidyltransferase/poly(A) polymerase family. Archaeal CCA-adding enzyme subfamily. In terms of assembly, homodimer. Requires Mg(2+) as cofactor.

It carries out the reaction a tRNA precursor + 2 CTP + ATP = a tRNA with a 3' CCA end + 3 diphosphate. The enzyme catalyses a tRNA with a 3' CCA end + 2 CTP + ATP = a tRNA with a 3' CCACCA end + 3 diphosphate. Its function is as follows. Catalyzes the addition and repair of the essential 3'-terminal CCA sequence in tRNAs without using a nucleic acid template. Adds these three nucleotides in the order of C, C, and A to the tRNA nucleotide-73, using CTP and ATP as substrates and producing inorganic pyrophosphate. tRNA 3'-terminal CCA addition is required both for tRNA processing and repair. Also involved in tRNA surveillance by mediating tandem CCA addition to generate a CCACCA at the 3' terminus of unstable tRNAs. While stable tRNAs receive only 3'-terminal CCA, unstable tRNAs are marked with CCACCA and rapidly degraded. In Halorubrum lacusprofundi (strain ATCC 49239 / DSM 5036 / JCM 8891 / ACAM 34), this protein is CCA-adding enzyme.